The primary structure comprises 91 residues: Small ribosomal subunit protein uS15 (91 aa).

It belongs to the universal ribosomal protein uS15 family. Part of the 30S ribosomal subunit. Forms a bridge to the 50S subunit in the 70S ribosome, contacting the 23S rRNA.

Functionally, one of the primary rRNA binding proteins, it binds directly to 16S rRNA where it helps nucleate assembly of the platform of the 30S subunit by binding and bridging several RNA helices of the 16S rRNA. Forms an intersubunit bridge (bridge B4) with the 23S rRNA of the 50S subunit in the ribosome. The protein is Small ribosomal subunit protein uS15 of Rickettsia felis (strain ATCC VR-1525 / URRWXCal2) (Rickettsia azadi).